The following is a 132-amino-acid chain: HLA class I histocompatibility antigen protein P5 (132 aa).

As to expression, expressed in lymphoid tissues; Detected in spleen as well as in B-cell lines, NK cell lines and activated lymphocytes.

This chain is HLA class I histocompatibility antigen protein P5 (HCP5), found in Homo sapiens (Human).